Reading from the N-terminus, the 206-residue chain is GTP cyclohydrolase 1 (206 aa).

Zn(2+) is bound by residues cysteine 95, histidine 98, and cysteine 166.

This sequence belongs to the GTP cyclohydrolase I family. Toroid-shaped homodecamer, composed of two pentamers of five dimers.

It carries out the reaction GTP + H2O = 7,8-dihydroneopterin 3'-triphosphate + formate + H(+). Its pathway is cofactor biosynthesis; 7,8-dihydroneopterin triphosphate biosynthesis; 7,8-dihydroneopterin triphosphate from GTP: step 1/1. The protein is GTP cyclohydrolase 1 of Bartonella henselae (strain ATCC 49882 / DSM 28221 / CCUG 30454 / Houston 1) (Rochalimaea henselae).